We begin with the raw amino-acid sequence, 73 residues long: Putative sodium channel toxin Ts39 (73 aa).

The N-terminal stretch at 1–22 is a signal peptide; that stretch reads MKTLNFCLFLVIISSLTVRVFC. In terms of domain architecture, LCN-type CS-alpha/beta spans 24–73; that stretch reads NDRFLTVNDNYVICLYINKSFVNCENLCKAYMNAKDGFCRQPHCFCTDVE. Cystine bridges form between Cys37-Cys62, Cys47-Cys67, and Cys51-Cys69.

The protein belongs to the long (3 C-C) scorpion toxin superfamily. Sodium channel inhibitor family. Expressed by the venom gland.

It localises to the secreted. In terms of biological role, putative sodium channel toxin. The sequence is that of Putative sodium channel toxin Ts39 from Tityus serrulatus (Brazilian scorpion).